Here is a 352-residue protein sequence, read N- to C-terminus: Transcription factor MYB86 (352 aa).

HTH myb-type domains are found at residues 9–61 (KQKL…INYL) and 62–116 (RPDL…KKKL). 2 DNA-binding regions (H-T-H motif) span residues 37-61 (WSSVPKLAGLQRCGKSCRLRWINYL) and 89-112 (WSQIATRLPGRTDNEIKNFWNSCL).

As to expression, expressed in stems, flowers and seeds. Weakly expressed in leaves and roots.

The protein localises to the nucleus. Probable transcription factor. This chain is Transcription factor MYB86 (MYB86), found in Arabidopsis thaliana (Mouse-ear cress).